A 415-amino-acid polypeptide reads, in one-letter code: AP-3 complex subunit mu (415 aa).

The 237-residue stretch at 178-414 (SNEVYVDLVE…QTRAGEFDVR (237 aa)) folds into the MHD domain.

The protein belongs to the adaptor complexes medium subunit family. In terms of assembly, adaptor protein complex 3 (AP-3) is a heterotetramer composed of two large adaptins (delta-type subunit and beta-type subunit), a medium adaptin (mu-type subunit) and a small adaptin (sigma-type subunit).

It localises to the cytoplasm. The protein resides in the golgi apparatus. The protein localises to the cytoplasmic vesicle membrane. Functionally, part of the AP-3 complex, an adaptor-related complex which seems to be clathrin-associated. The complex is associated with the Golgi region as well as more peripheral structures. It facilitates the budding of vesicles from the Golgi membrane and may be directly involved in trafficking to the vacuole. It also functions in maintaining the identity of lytic vacuoles and in regulating the transition between storage and lytic vacuoles. The protein is AP-3 complex subunit mu (AP3M) of Arabidopsis thaliana (Mouse-ear cress).